Consider the following 417-residue polypeptide: Serine hydroxymethyltransferase (417 aa).

Residues Leu-121 and Gly-125–Leu-127 each bind (6S)-5,6,7,8-tetrahydrofolate. Residue Lys-229 is modified to N6-(pyridoxal phosphate)lysine. Ser-355–Phe-357 provides a ligand contact to (6S)-5,6,7,8-tetrahydrofolate.

It belongs to the SHMT family. In terms of assembly, homodimer. The cofactor is pyridoxal 5'-phosphate.

It is found in the cytoplasm. It catalyses the reaction (6R)-5,10-methylene-5,6,7,8-tetrahydrofolate + glycine + H2O = (6S)-5,6,7,8-tetrahydrofolate + L-serine. The protein operates within one-carbon metabolism; tetrahydrofolate interconversion. Its pathway is amino-acid biosynthesis; glycine biosynthesis; glycine from L-serine: step 1/1. In terms of biological role, catalyzes the reversible interconversion of serine and glycine with tetrahydrofolate (THF) serving as the one-carbon carrier. This reaction serves as the major source of one-carbon groups required for the biosynthesis of purines, thymidylate, methionine, and other important biomolecules. Also exhibits THF-independent aldolase activity toward beta-hydroxyamino acids, producing glycine and aldehydes, via a retro-aldol mechanism. This chain is Serine hydroxymethyltransferase, found in Klebsiella pneumoniae subsp. pneumoniae (strain ATCC 700721 / MGH 78578).